The chain runs to 341 residues: Spore photoproduct lyase (341 aa).

The 229-residue stretch at 76 to 304 (SKPSAEYAIP…ESKRKYKWGR (229 aa)) folds into the Radical SAM core domain. [4Fe-4S] cluster is bound by residues Cys90, Cys94, and Cys97. A DNA-binding region (H-T-H motif) is located at residues 217–234 (QAARKVAGAGYKLGFVVA).

The protein belongs to the radical SAM superfamily. SPL family. Monomer or homodimer. Requires [4Fe-4S] cluster as cofactor. S-adenosyl-L-methionine serves as cofactor.

The catalysed reaction is (5R)-5,6-dihydro-5-(thymidin-7-yl)thymidine in DNA = a thymidine dimer in DNA. In terms of biological role, involved in repair of UV radiation-induced DNA damage during spore germination. Can repair thymine dimer 5-thyminyl-5,6-dihydrothymine (known as spore photoproduct (SP)) by in situ monomerization of SP to two thymines. The protein is Spore photoproduct lyase (splG) of Geobacillus sp. (strain Y412MC61).